The chain runs to 206 residues: Methylthioribulose-1-phosphate dehydratase (206 aa).

Positions 96 and 98 each coordinate Zn(2+).

It belongs to the aldolase class II family. MtnB subfamily. Requires Zn(2+) as cofactor.

It carries out the reaction 5-(methylsulfanyl)-D-ribulose 1-phosphate = 5-methylsulfanyl-2,3-dioxopentyl phosphate + H2O. Its pathway is amino-acid biosynthesis; L-methionine biosynthesis via salvage pathway; L-methionine from S-methyl-5-thio-alpha-D-ribose 1-phosphate: step 2/6. Functionally, catalyzes the dehydration of methylthioribulose-1-phosphate (MTRu-1-P) into 2,3-diketo-5-methylthiopentyl-1-phosphate (DK-MTP-1-P). The sequence is that of Methylthioribulose-1-phosphate dehydratase from Exiguobacterium sibiricum (strain DSM 17290 / CCUG 55495 / CIP 109462 / JCM 13490 / 255-15).